Here is a 440-residue protein sequence, read N- to C-terminus: tRNA-2-methylthio-N(6)-dimethylallyladenosine synthase (440 aa).

The 119-residue stretch at 4–122 (KSYYIITHGC…LPKILERVFE (119 aa)) folds into the MTTase N-terminal domain. Positions 13, 49, 83, 159, 163, and 166 each coordinate [4Fe-4S] cluster. Positions 145 to 375 (REPGVRAWVT…IELQNGISLE (231 aa)) constitute a Radical SAM core domain. Positions 378–440 (KNEEGNIHEI…KLFHLEGVLV (63 aa)) constitute a TRAM domain.

This sequence belongs to the methylthiotransferase family. MiaB subfamily. As to quaternary structure, monomer. It depends on [4Fe-4S] cluster as a cofactor.

Its subcellular location is the cytoplasm. The catalysed reaction is N(6)-dimethylallyladenosine(37) in tRNA + (sulfur carrier)-SH + AH2 + 2 S-adenosyl-L-methionine = 2-methylsulfanyl-N(6)-dimethylallyladenosine(37) in tRNA + (sulfur carrier)-H + 5'-deoxyadenosine + L-methionine + A + S-adenosyl-L-homocysteine + 2 H(+). Catalyzes the methylthiolation of N6-(dimethylallyl)adenosine (i(6)A), leading to the formation of 2-methylthio-N6-(dimethylallyl)adenosine (ms(2)i(6)A) at position 37 in tRNAs that read codons beginning with uridine. The protein is tRNA-2-methylthio-N(6)-dimethylallyladenosine synthase of Carboxydothermus hydrogenoformans (strain ATCC BAA-161 / DSM 6008 / Z-2901).